We begin with the raw amino-acid sequence, 709 residues long: MLFELSIGAIIGFLTLYLLKRFNESKNFITPDNLKKIPIVEGAVPVLGHGPAFSKDIMQFMKNCYKKYGSVFQLKIFRTNMVVLCDRKLSEEFFKSRENDMSLYDVLNRLFFGLAFSDKPDSLEFIIKMVKKTITIRYDDFAPKIMDEAQRLTKIMRESHSGKKLDMIPEIIKFVSRTSARCFIAMDIDDEFYDALNKFTNLLNKIVVLTYFVPHWLLNATLNRFMLRKYRMRMTKLLENEIEKYRTDLNKSDSLLFRKCVDHIDPETGATLTNQDIGDIVVCLLYVSSENTSLLATNCLIDLTLNPKYWDLIKSECSAMIALGDYKNLFKAPLLNSIVMESARLNSHVFALARKPKTVNRIGDYFVADNVDTISLCEPALMKFEIASDVYANPNSYDPVRFMAPRNEPKDSGHVMNWGKGVHECPGKQFAIYEVKAAIAYIVTNFERFEFNHNDLKINYFSPSAMCEKNISVEFIPSQQNIHNIVYKDRTYIVEHIKCNETSAWLIYNALDRQQQREYYQYTYEISTDSQEHKLIEKAGPHKPFPIAYDKLVYTGQSNCMTPTKWYDFASDIWELLTENYAELGFPIYDDKIRNFVPNSFYGQLYSVESIMPTHRDQHVDYGLSISIGSNCEFVIEDKTILLPSGSVLIGDFSKISHSVSKIFHEKPDHLSDFEFFNRVRFSAQIRSIDPDVQPLMTTQEFLDMISEY.

Heme is bound at residue Cys425.

It belongs to the cytochrome P450 family. Heme is required as a cofactor.

The protein resides in the membrane. The catalysed reaction is a 14alpha-methyl steroid + 3 reduced [NADPH--hemoprotein reductase] + 3 O2 = a Delta(14) steroid + formate + 3 oxidized [NADPH--hemoprotein reductase] + 4 H2O + 4 H(+). The protein operates within steroid biosynthesis; zymosterol biosynthesis; zymosterol from lanosterol: step 1/6. Its function is as follows. Catalyzes the 14-alpha demethylation of obtusifoliol to 4 alpha-methyl-5 alpha-ergosta-8,14,24(28)-trien-3 beta-ol. This chain is Probable lanosterol 14-alpha demethylase, found in Acanthamoeba polyphaga (Amoeba).